A 782-amino-acid chain; its full sequence is Phosphoribosylformylglycinamidine synthase subunit PurL (782 aa).

Residue His-50 is part of the active site. Residues Tyr-53 and Lys-92 each contribute to the ATP site. Glu-94 is a Mg(2+) binding site. Substrate is bound by residues 95–98 (SHNH) and Arg-117. His-96 acts as the Proton acceptor in catalysis. Position 118 (Asp-118) interacts with Mg(2+). A substrate-binding site is contributed by Gln-241. Asp-269 is a Mg(2+) binding site. 313 to 315 (ESQ) contributes to the substrate binding site. Positions 520 and 557 each coordinate ATP. Asn-558 contributes to the Mg(2+) binding site. A substrate-binding site is contributed by Ser-560.

Belongs to the FGAMS family. Monomer. Part of the FGAM synthase complex composed of 1 PurL, 1 PurQ and 2 PurS subunits.

The protein resides in the cytoplasm. The catalysed reaction is N(2)-formyl-N(1)-(5-phospho-beta-D-ribosyl)glycinamide + L-glutamine + ATP + H2O = 2-formamido-N(1)-(5-O-phospho-beta-D-ribosyl)acetamidine + L-glutamate + ADP + phosphate + H(+). It functions in the pathway purine metabolism; IMP biosynthesis via de novo pathway; 5-amino-1-(5-phospho-D-ribosyl)imidazole from N(2)-formyl-N(1)-(5-phospho-D-ribosyl)glycinamide: step 1/2. Its function is as follows. Part of the phosphoribosylformylglycinamidine synthase complex involved in the purines biosynthetic pathway. Catalyzes the ATP-dependent conversion of formylglycinamide ribonucleotide (FGAR) and glutamine to yield formylglycinamidine ribonucleotide (FGAM) and glutamate. The FGAM synthase complex is composed of three subunits. PurQ produces an ammonia molecule by converting glutamine to glutamate. PurL transfers the ammonia molecule to FGAR to form FGAM in an ATP-dependent manner. PurS interacts with PurQ and PurL and is thought to assist in the transfer of the ammonia molecule from PurQ to PurL. This chain is Phosphoribosylformylglycinamidine synthase subunit PurL, found in Cyanothece sp. (strain PCC 7425 / ATCC 29141).